Here is a 1641-residue protein sequence, read N- to C-terminus: Ophiophagus venom factor (1641 aa).

A signal peptide spans 1–22 (MEGMALYLVAALLIGFPGSSHG). Asn181 and Asn209 each carry an N-linked (GlcNAc...) asparagine glycan. The Mg(2+) site is built by Pro507, Asp530, Val531, and Asp533. Intrachain disulfides connect Cys535–Cys796, Cys604–Cys639, Cys672–Cys699, Cys673–Cys706, Cys686–Cys707, Cys852–Cys1491, Cys1336–Cys1467, Cys1367–Cys1436, Cys1484–Cys1489, Cys1496–Cys1568, Cys1515–Cys1639, and Cys1615–Cys1624. A propeptide spanning residues 645–728 (RRRRSSVLLL…WESGLFLPRN (84 aa)) is cleaved from the precursor. Residues 649-727 (SSVLLLDSKA…QWESGLFLPR (79 aa)) are C3a-like domain. The Anaphylatoxin-like domain maps to 672-707 (CCEDSMHENPMGYTCEKRAKYIQEGDACKAAFLECC). The tract at residues 731 to 742 (EDGFIQDSDIIP) is factor B binding site. Positions 981-1259 (HLIITPSGCG…VMLFQALAEY (279 aa)) are excised as a propeptide. Positions 981–1259 (HLIITPSGCG…VMLFQALAEY (279 aa)) are C3d-like domain. Residues 989 to 992 (CGEQ) constitute a cross-link (isoglutamyl cysteine thioester (Cys-Gln)). The tract at residues 1186–1249 (VLMAASTGKN…GGTYGQTQAT (64 aa)) is factor H binding site. One can recognise an NTR domain in the interval 1496-1639 (CSLLSQQEKI…LSNILTIFGC (144 aa)).

It belongs to the venom complement C3 homolog family. As to quaternary structure, heterotrimer of alpha, beta and gamma chains; disulfide-linked. May be active with factor B in the presence of factor D. First processed by the removal of 4 Arg residues by furin-type protease, forming two chains, alpha and gamma/beta precursor, linked by a disulfide bond. Probably, a cobrin-like protease cleaves the C3a-like domain and then the C3d-like domain, generating the mature venom factor (OVF). In terms of processing, the beta chain is not glycosylated. In terms of tissue distribution, expressed by the venom gland.

Its subcellular location is the secreted. Its function is as follows. Complement-activating protein in cobra venom. It is a structural and functional analog of complement component C3b, the activated form of C3. It binds factor B (CFB), which is subsequently cleaved by factor D (CFD) to form the bimolecular complex OVF/Bb. OVF/Bb is a C3/C5 convertase that cleaves both complement components C3 and C5. Structurally, it resembles the C3b degradation product C3c, which is not able to form a C3/C5 convertase. Unlike C3b/Bb, OVF/Bb is a stable complex and completely resistant to the actions of complement regulatory factors H (CFH) and I (CFI). Therefore, OVF continuously activates complement. As a result, OVF exhibits complement-depleting activity. The chain is Ophiophagus venom factor from Ophiophagus hannah (King cobra).